Here is a 327-residue protein sequence, read N- to C-terminus: Cytochrome c biogenesis protein CcsA (327 aa).

A run of 8 helical transmembrane segments spans residues 13–33 (ISFS…LVNL), 46–66 (GIII…IYSG), 73–93 (LYES…VSYF), 101–121 (LNAI…SGLL), 145–165 (MILG…LLVI), 233–253 (IISL…VWAN), 262–282 (WDPK…YLHI), and 294–314 (AIVA…VNLL).

It belongs to the CcmF/CycK/Ccl1/NrfE/CcsA family. May interact with Ccs1.

It localises to the plastid. Its subcellular location is the chloroplast thylakoid membrane. Required during biogenesis of c-type cytochromes (cytochrome c6 and cytochrome f) at the step of heme attachment. The protein is Cytochrome c biogenesis protein CcsA of Lobularia maritima (Sweet alyssum).